Here is a 335-residue protein sequence, read N- to C-terminus: Phosphatidylglycerol--prolipoprotein diacylglyceryl transferase (335 aa).

A run of 3 helical transmembrane segments spans residues 31–51 (IYWYGIIFVCGFLLAILTYSL), 67–87 (YIFLAIPMTIIGARLWSLAIG), and 100–120 (LAIQGGVIAGVLSAAIYFPLI). Arg-163 serves as a coordination point for a 1,2-diacyl-sn-glycero-3-phospho-(1'-sn-glycerol). 3 consecutive transmembrane segments (helical) span residues 213–233 (PLFLYESFFNVIVFVFIYFGL), 235–255 (YIKQLKIGFVSMSYFFFYGVI), and 277–297 (SLLLIFGVLGALYVQFIAPIL).

Belongs to the Lgt family.

The protein resides in the cell membrane. It carries out the reaction L-cysteinyl-[prolipoprotein] + a 1,2-diacyl-sn-glycero-3-phospho-(1'-sn-glycerol) = an S-1,2-diacyl-sn-glyceryl-L-cysteinyl-[prolipoprotein] + sn-glycerol 1-phosphate + H(+). It participates in protein modification; lipoprotein biosynthesis (diacylglyceryl transfer). Functionally, catalyzes the transfer of the diacylglyceryl group from phosphatidylglycerol to the sulfhydryl group of the N-terminal cysteine of a prolipoprotein, the first step in the formation of mature lipoproteins. This chain is Phosphatidylglycerol--prolipoprotein diacylglyceryl transferase, found in Ureaplasma urealyticum serovar 10 (strain ATCC 33699 / Western).